The primary structure comprises 385 residues: GDSL esterase/lipase At5g08460 (385 aa).

An N-terminal signal peptide occupies residues 1 to 35; that stretch reads MHDSEIFKFKDMMMMSCTVQTLVLVPWFLVVFVLA. S56 acts as the Nucleophile in catalysis. Residues N218 and N285 are each glycosylated (N-linked (GlcNAc...) asparagine). Residues D350 and H353 contribute to the active site. N-linked (GlcNAc...) asparagine glycans are attached at residues N368 and N378.

It belongs to the 'GDSL' lipolytic enzyme family.

It localises to the secreted. The sequence is that of GDSL esterase/lipase At5g08460 from Arabidopsis thaliana (Mouse-ear cress).